A 194-amino-acid chain; its full sequence is Nucleoside triphosphate pyrophosphatase (194 aa).

Catalysis depends on D68, which acts as the Proton acceptor.

This sequence belongs to the Maf family. Requires a divalent metal cation as cofactor.

The protein localises to the cytoplasm. It catalyses the reaction a ribonucleoside 5'-triphosphate + H2O = a ribonucleoside 5'-phosphate + diphosphate + H(+). The catalysed reaction is a 2'-deoxyribonucleoside 5'-triphosphate + H2O = a 2'-deoxyribonucleoside 5'-phosphate + diphosphate + H(+). Its function is as follows. Nucleoside triphosphate pyrophosphatase. May have a dual role in cell division arrest and in preventing the incorporation of modified nucleotides into cellular nucleic acids. This is Nucleoside triphosphate pyrophosphatase from Corynebacterium jeikeium (strain K411).